The following is a 355-amino-acid chain: Putative L-lysine 2,3-aminomutase (355 aa).

The region spanning 93-308 (VHQYANRVLM…KERLSGLSLP (216 aa)) is the Radical SAM core domain. Residues Cys-108, Cys-112, and Cys-115 each coordinate [4Fe-4S] cluster. Lys-320 carries the N6-(pyridoxal phosphate)lysine modification.

This sequence belongs to the radical SAM superfamily. KamA family. It depends on [4Fe-4S] cluster as a cofactor. Requires pyridoxal 5'-phosphate as cofactor.

This is Putative L-lysine 2,3-aminomutase from Treponema pallidum (strain Nichols).